The sequence spans 78 residues: uncharacterized protein (78 aa).

This is an uncharacterized protein from Escherichia coli.